A 92-amino-acid polypeptide reads, in one-letter code: Small ribosomal subunit protein uS19 (92 aa).

The protein belongs to the universal ribosomal protein uS19 family.

In terms of biological role, protein S19 forms a complex with S13 that binds strongly to the 16S ribosomal RNA. This is Small ribosomal subunit protein uS19 from Caulobacter vibrioides (strain ATCC 19089 / CIP 103742 / CB 15) (Caulobacter crescentus).